A 1095-amino-acid chain; its full sequence is DNA-directed RNA polymerase subunit beta (1095 aa).

Residues 1069-1095 (DLMQDVNPRRSTPSRPTYESLGKEYEE) are disordered.

This sequence belongs to the RNA polymerase beta chain family. In cyanobacteria the RNAP catalytic core is composed of 2 alpha, 1 beta, 1 beta', 1 gamma and 1 omega subunit. When a sigma factor is associated with the core the holoenzyme is formed, which can initiate transcription.

The catalysed reaction is RNA(n) + a ribonucleoside 5'-triphosphate = RNA(n+1) + diphosphate. Functionally, DNA-dependent RNA polymerase catalyzes the transcription of DNA into RNA using the four ribonucleoside triphosphates as substrates. This chain is DNA-directed RNA polymerase subunit beta, found in Prochlorococcus marinus (strain NATL2A).